A 314-amino-acid chain; its full sequence is 3'-5' exoribonuclease YhaM (314 aa).

One can recognise an HD domain in the interval 163 to 279 (HVVSMLHLAK…LHYIDNLDAK (117 aa)).

The protein belongs to the YhaM family.

Functionally, shows a 3'-5' exoribonuclease activity. The polypeptide is 3'-5' exoribonuclease YhaM (Bacillus pumilus (strain SAFR-032)).